A 90-amino-acid chain; its full sequence is 10.1 kDa protein (90 aa).

This Pseudomonas aeruginosa (Bacteriophage Pf1) protein is 10.1 kDa protein.